The primary structure comprises 30 residues: Cyclotide mech-1 (30 aa).

The segment at residues 1-30 is a cross-link (cyclopeptide (Gly-Asp)); it reads GVIPCGESCVFIPCINKKKCSCKNKVCYRD. Intrachain disulfides connect cysteine 5–cysteine 20, cysteine 9–cysteine 22, and cysteine 14–cysteine 27.

In terms of processing, this is a cyclic peptide. Post-translationally, contains 3 disulfide bonds.

Its function is as follows. Probably participates in a plant defense mechanism (Potential). Binds to and induces leakage in phospholipd membranes, particularly ones containing 1-palmitoyl-2-oleophosphatidylethanolamine (POPE). Not active against Gram-negative bacterium E.coli ATCC 25922 or Gram-positive bacterium S.aureus ATCC 25923 up to a concentration of 64 uM. The protein is Cyclotide mech-1 of Melicytus chathamicus (Chatham Island mahoe).